Reading from the N-terminus, the 216-residue chain is Urease accessory protein UreG (216 aa).

Position 25–32 (25–32 (GPVGSGKT)) interacts with GTP.

This sequence belongs to the SIMIBI class G3E GTPase family. UreG subfamily. Homodimer. UreD, UreF and UreG form a complex that acts as a GTP-hydrolysis-dependent molecular chaperone, activating the urease apoprotein by helping to assemble the nickel containing metallocenter of UreC. The UreE protein probably delivers the nickel.

Its subcellular location is the cytoplasm. Its function is as follows. Facilitates the functional incorporation of the urease nickel metallocenter. This process requires GTP hydrolysis, probably effectuated by UreG. This Burkholderia pseudomallei (strain 1710b) protein is Urease accessory protein UreG.